A 513-amino-acid polypeptide reads, in one-letter code: ATP synthase subunit alpha (513 aa).

169–176 (GDRQTGKS) is an ATP binding site.

Belongs to the ATPase alpha/beta chains family. As to quaternary structure, F-type ATPases have 2 components, CF(1) - the catalytic core - and CF(0) - the membrane proton channel. CF(1) has five subunits: alpha(3), beta(3), gamma(1), delta(1), epsilon(1). CF(0) has three main subunits: a(1), b(2) and c(9-12). The alpha and beta chains form an alternating ring which encloses part of the gamma chain. CF(1) is attached to CF(0) by a central stalk formed by the gamma and epsilon chains, while a peripheral stalk is formed by the delta and b chains.

It is found in the cell inner membrane. The enzyme catalyses ATP + H2O + 4 H(+)(in) = ADP + phosphate + 5 H(+)(out). Produces ATP from ADP in the presence of a proton gradient across the membrane. The alpha chain is a regulatory subunit. The chain is ATP synthase subunit alpha from Blochmanniella floridana.